We begin with the raw amino-acid sequence, 484 residues long: Notoamide biosynthesis transcriptional activator notL (484 aa).

The segment at residues 33–60 (CQSCATSKIKCPKEKTSCSKCQARGIEC) is a DNA-binding region (zn(2)-C6 fungal-type). Disordered regions lie at residues 70 to 154 (RRRE…NNSV) and 363 to 387 (GGGE…QMRP). The segment covering 76–122 (TGHPTSCTSTSTTANSSSSSSRSSNSSSSSSTSPPSSSSSLSSNPEP) has biased composition (low complexity). The span at 123 to 133 (TSDKDLPRPRS) shows a compositional bias: basic and acidic residues. Composition is skewed to polar residues over residues 139–154 (ANST…NNSV) and 368–378 (DTGQRPATSMI).

The protein resides in the nucleus. Its function is as follows. Transcription factor that probably regulates the expression of the gene cluster that mediates the biosynthesis of notoamide, a fungal indole alkaloid that belongs to a family of natural products containing a characteristic bicyclo[2.2.2]diazaoctane core. In Aspergillus sp. (strain MF297-2), this protein is Notoamide biosynthesis transcriptional activator notL.